The following is a 417-amino-acid chain: Voltage-gated potassium channel Kch (417 aa).

Over 1-21 (MSHWATFKQTATNLWVTLRHD) the chain is Cytoplasmic. Residues 22–41 (ILALAVFLNGLLIFKTIYGM) traverse the membrane as a helical segment. The Periplasmic portion of the chain corresponds to 42–63 (SVNLLDIFHIKAFSELDLSLLA). A helical membrane pass occupies residues 64-83 (NAPLFMLGVFLVLNSIGLLF). Residues 84–86 (RAK) are Cytoplasmic-facing. Residues 87–104 (LAWAISIILLLIALIYTL) traverse the membrane as a helical segment. Topologically, residues 105–110 (HFYPWL) are periplasmic. A helical membrane pass occupies residues 111–127 (KFSIGFCIFTLVFLLIL). Residues 128 to 140 (RKDFSHSSAAAGT) are Cytoplasmic-facing. A helical membrane pass occupies residues 141–160 (IFAFISFTTLLFYSTYGALY). Residues 161 to 199 (LSEGFNPRIESLMTAFYFSIETMSTVGYGDIVPVSESAR) are Periplasmic-facing. A Selectivity filter motif is present at residues 185–190 (TVGYGD). The chain crosses the membrane as a helical span at residues 200 to 220 (LFTISVIISGITVFATSMTSI). Over 221–417 (FGPLIRGGFN…KADSKESAQK (197 aa)) the chain is Cytoplasmic. The region spanning 243–363 (KDHFIVCGHS…IKMVHPDIIL (121 aa)) is the RCK N-terminal domain.

This sequence belongs to the potassium channel family. As to quaternary structure, dimer.

The protein resides in the cell inner membrane. K(+)-specific ion channel. May play a role in the defense against osmotic shock. The sequence is that of Voltage-gated potassium channel Kch (kch) from Escherichia coli (strain K12).